Reading from the N-terminus, the 468-residue chain is MSSGKIAQVVGPVVDVMFASGDKLPEINNALIVYKDSDKKQKIVLEVALELGDGMVRTIAMESTDGLTRGLEVLDTGRAISVPVGKETLGRVFNVLGETIDLEEPFAEDVDRQPIHKKAPSFDELSTSSEILETGIKVIDLLAPYLKGGKVGLFGGAGVGKTVLIQELIHNIAQEHGGISVFTGVGERTREGNDLYWEMKESGVIEKTAMVFGQMNEPPGARMRVALTGLTIAEYFRDVEGQDVLLFIDNIFRFTQAGSEVSALLGRMPSAVGYQPTLATEMGQLQERITSTQKGSVTSIQAIYVPADDYTDPAPATAFAHLDSTTNLERKLTQMGIYPAVDPLASSSRALSPEIVGEEHYAVATEVQRVLQRYRELQDIIAILGMDELSDEEKTLVGRARRIQFFLSQNFNVAEQFTGLPGSYVPVAETVRGFKEILEGKYDDLPEDAFRSVGPIEDVIKKAEKMGF.

155–162 (GGAGVGKT) is a binding site for ATP.

It belongs to the ATPase alpha/beta chains family. In terms of assembly, F-type ATPases have 2 components, CF(1) - the catalytic core - and CF(0) - the membrane proton channel. CF(1) has five subunits: alpha(3), beta(3), gamma(1), delta(1), epsilon(1). CF(0) has three main subunits: a(1), b(2) and c(9-12). The alpha and beta chains form an alternating ring which encloses part of the gamma chain. CF(1) is attached to CF(0) by a central stalk formed by the gamma and epsilon chains, while a peripheral stalk is formed by the delta and b chains.

Its subcellular location is the cell membrane. The enzyme catalyses ATP + H2O + 4 H(+)(in) = ADP + phosphate + 5 H(+)(out). Functionally, produces ATP from ADP in the presence of a proton gradient across the membrane. The catalytic sites are hosted primarily by the beta subunits. This chain is ATP synthase subunit beta, found in Streptococcus pyogenes serotype M3 (strain ATCC BAA-595 / MGAS315).